A 221-amino-acid polypeptide reads, in one-letter code: Urease accessory protein UreF (221 aa).

This sequence belongs to the UreF family. As to quaternary structure, ureD, UreF and UreG form a complex that acts as a GTP-hydrolysis-dependent molecular chaperone, activating the urease apoprotein by helping to assemble the nickel containing metallocenter of UreC. The UreE protein probably delivers the nickel.

It is found in the cytoplasm. Required for maturation of urease via the functional incorporation of the urease nickel metallocenter. The sequence is that of Urease accessory protein UreF from Vibrio parahaemolyticus.